A 249-amino-acid polypeptide reads, in one-letter code: Leucyl/phenylalanyl-tRNA--protein transferase (249 aa).

This sequence belongs to the L/F-transferase family.

The protein localises to the cytoplasm. It catalyses the reaction N-terminal L-lysyl-[protein] + L-leucyl-tRNA(Leu) = N-terminal L-leucyl-L-lysyl-[protein] + tRNA(Leu) + H(+). The catalysed reaction is N-terminal L-arginyl-[protein] + L-leucyl-tRNA(Leu) = N-terminal L-leucyl-L-arginyl-[protein] + tRNA(Leu) + H(+). The enzyme catalyses L-phenylalanyl-tRNA(Phe) + an N-terminal L-alpha-aminoacyl-[protein] = an N-terminal L-phenylalanyl-L-alpha-aminoacyl-[protein] + tRNA(Phe). Functionally, functions in the N-end rule pathway of protein degradation where it conjugates Leu, Phe and, less efficiently, Met from aminoacyl-tRNAs to the N-termini of proteins containing an N-terminal arginine or lysine. The protein is Leucyl/phenylalanyl-tRNA--protein transferase of Xanthomonas axonopodis pv. citri (strain 306).